Here is a 336-residue protein sequence, read N- to C-terminus: Serpentine receptor class gamma-9 (336 aa).

Transmembrane regions (helical) follow at residues 30–50, 64–84, 111–131, 152–172, 200–220, 237–257, and 271–291; these read LLQA…LYVI, FVIY…DIFI, IYYP…IFLT, LSFI…NTII, FLFL…VIMF, LCLA…FEAL, and FLIQ…IMIF.

Belongs to the nematode receptor-like protein srg family.

It localises to the membrane. The sequence is that of Serpentine receptor class gamma-9 (srg-9) from Caenorhabditis elegans.